We begin with the raw amino-acid sequence, 219 residues long: Asperlin biosynthesis cluster protein I (219 aa).

Positions 97–124 are disordered; it reads TGSSDNSPTATGIGAAGLTGDRPSSSGA. Over residues 105-116 the composition is skewed to low complexity; sequence TATGIGAAGLTG.

It participates in polyketide biosynthesis. Its function is as follows. Part of the gene cluster that mediates the biosynthesis of asperlin, a polyketide showing anti-inflammatory, antitumor and antibiotic activities. The first step of the asperlin biosynthesis is the production of the intermediate 2,4,6-octatrienoic acid by the highly redusing polyketide synthase alnA with cleavage of the PKS product by the esterase alnB. 2,4,6-octatrienoic acid is further converted to asperlin via several steps involving the remaining enzymes from the cluster. In Emericella nidulans (strain FGSC A4 / ATCC 38163 / CBS 112.46 / NRRL 194 / M139) (Aspergillus nidulans), this protein is Asperlin biosynthesis cluster protein I.